The primary structure comprises 560 residues: Triacylglyceride transporter MSMEG_3069/MSMEI_2992 (560 aa).

Transmembrane regions (helical) follow at residues 16–36, 48–68, 78–98, 108–128, 143–163, 168–188, 200–220, 229–249, 269–289, 307–327, 336–356, 368–388, 411–431, and 477–497; these read LAVL…VDIM, QVTP…PLLG, MLIQ…ALSS, IIQG…AADL, AAQE…VWLF, AVFW…HFSL, VDVI…VGLY, VLPS…VAFF, PFLA…VTLV, AFLL…GGWL, VVLI…HWSV, FTLP…GLVI, VVVA…AWGF, and IFLS…LISG. A beta-hairpin region spans residues 362 to 371; it reads RHNLGLFTLP. Residues 519-560 form a disordered region; it reads IDPYDAGDADDAPTEMLDLPTQVLSAPPSDPGDERPGRHRAP.

It belongs to the major facilitator superfamily. P55 (TC 2.A.1.3.34) family.

It localises to the cell inner membrane. Resistance to ethidium bromide is inhibited by reserpine. Functionally, in association with lipoprotein LprG transports triacyglycerides (TAG) across the inner cell membrane into the periplasm; TAG probably regulates lipid metabolism and growth regulation and plays a structural role in the outer membrane. TAG (and maybe other lipids) enters the central cavity of the P55 transporter from within the cell inner membrane via clefts on the cytoplasmic face of P55 between TM5-TM8 and TM2-TM11. From there the lipid is probably transferred to the hydrophobic cavity of LprG. Confers resistance to ethidium bromide, possibly acting as an efflux pump, requires LprG lipoprotein for normal function. Export of ethidium bromide can be complemented by the equivalent operon from M.tuberculosis (lprG-Rv1410c). Involved in drug susceptibilty, its expression alone partially complements the antibiotic susceptibilty of a double lprG-mfs deletion. Probably does not function as a bona fide drug efflux pump, but instead plays a role in outer membrane biogenesis. Probably required with LprG for normal surface localization of lipoarabinomannan (LAM). This is Triacylglyceride transporter MSMEG_3069/MSMEI_2992 from Mycolicibacterium smegmatis (strain ATCC 700084 / mc(2)155) (Mycobacterium smegmatis).